We begin with the raw amino-acid sequence, 405 residues long: MDTKAFKRSLHSSNQYHRKGFGHEAEVTEMLRFEYQSSLIQQIRENGNRFQRGEVTIQLAEAFGFCWGVERAVALAYETRQHFPTERIWITNEIIHNPSVNQNLREMQVEFIPVDEQGQKDFSVVAGEDVVILPAFGASVQEMQLLNDKGCKIMDTTCPWVSKVWNSVEKHKKGSYTSIIHGKYQHEETIATSSYAATYLIVLDLKEAEYVCNYILNGGDREEFLHKFRHAYSPDFDPDRDLVRVGIANQTTMLKGETEQIGKLFERTLMRKYGPDQINQHFLSFNTICDATQERQDAMFKLVEYPLDLMVVIGGFNSSNTTHLQEISIEREIPSYHIDSADRIGPGNRVEHKPLHRPLEIKENWLPEGPIVVGITSGASTPDKVVSDVLEKIFALKSTSPALIP.

Cys-66 provides a ligand contact to [4Fe-4S] cluster. Residue His-96 coordinates (2E)-4-hydroxy-3-methylbut-2-enyl diphosphate. A dimethylallyl diphosphate-binding site is contributed by His-96. His-96 is a binding site for isopentenyl diphosphate. Cys-158 contacts [4Fe-4S] cluster. A (2E)-4-hydroxy-3-methylbut-2-enyl diphosphate-binding site is contributed by His-186. His-186 lines the dimethylallyl diphosphate pocket. His-186 lines the isopentenyl diphosphate pocket. Residue Glu-188 is the Proton donor of the active site. Thr-251 is a (2E)-4-hydroxy-3-methylbut-2-enyl diphosphate binding site. Cys-289 is a [4Fe-4S] cluster binding site. (2E)-4-hydroxy-3-methylbut-2-enyl diphosphate is bound by residues Ser-318, Ser-319, Asn-320, and Ser-380. 4 residues coordinate dimethylallyl diphosphate: Ser-318, Ser-319, Asn-320, and Ser-380. 4 residues coordinate isopentenyl diphosphate: Ser-318, Ser-319, Asn-320, and Ser-380.

It belongs to the IspH family. Requires [4Fe-4S] cluster as cofactor.

The enzyme catalyses isopentenyl diphosphate + 2 oxidized [2Fe-2S]-[ferredoxin] + H2O = (2E)-4-hydroxy-3-methylbut-2-enyl diphosphate + 2 reduced [2Fe-2S]-[ferredoxin] + 2 H(+). The catalysed reaction is dimethylallyl diphosphate + 2 oxidized [2Fe-2S]-[ferredoxin] + H2O = (2E)-4-hydroxy-3-methylbut-2-enyl diphosphate + 2 reduced [2Fe-2S]-[ferredoxin] + 2 H(+). Its pathway is isoprenoid biosynthesis; dimethylallyl diphosphate biosynthesis; dimethylallyl diphosphate from (2E)-4-hydroxy-3-methylbutenyl diphosphate: step 1/1. It functions in the pathway isoprenoid biosynthesis; isopentenyl diphosphate biosynthesis via DXP pathway; isopentenyl diphosphate from 1-deoxy-D-xylulose 5-phosphate: step 6/6. Functionally, catalyzes the conversion of 1-hydroxy-2-methyl-2-(E)-butenyl 4-diphosphate (HMBPP) into a mixture of isopentenyl diphosphate (IPP) and dimethylallyl diphosphate (DMAPP). Acts in the terminal step of the DOXP/MEP pathway for isoprenoid precursor biosynthesis. This Cyanothece sp. (strain PCC 7425 / ATCC 29141) protein is 4-hydroxy-3-methylbut-2-enyl diphosphate reductase.